Here is a 1682-residue protein sequence, read N- to C-terminus: Calmodulin-binding transcription activator 1 (1682 aa).

A DNA-binding region (CG-1) is located at residues 63–188; it reads KCSSLPKERH…YLNVPAIEDC (126 aa). The Nuclear localization signal signature appears at 112-119; the sequence is RKKVKYRK. Disordered regions lie at residues 284 to 375 and 599 to 622; these read RIIS…MVDS and SSFSQTGHSPHIHQTPSPSFFLQD. The span at 302–327 shows a compositional bias: basic and acidic residues; sequence EVQHNDVSEGKHEPSHGRSTSREKRN. 2 stretches are compositionally biased toward polar residues: residues 337–367 and 599–618; these read HQNSTEVSSTNQVEVPDTTQSSPVSISSGLN and SSFSQTGHSPHIHQTPSPSF. Residues 877-955 form the IPT/TIG domain; the sequence is DYSPEWSYPE…ISNSVVFEYK (79 aa). The tract at residues 992-1020 is disordered; it reads MAEMTGSQQHKQASGGGGSGSGSGSGAGG. Residues 1005–1020 show a composition bias toward gly residues; that stretch reads SGGGGSGSGSGSGAGG. ANK repeat units follow at residues 1066–1095, 1111–1141, and 1145–1174; these read RGMTLLHLAAAQGYATLIQTLIKWRTKHAD, FSCTPLMWACALGHLEAAVVLYKWDRRAISI, and LGRLPLGIARSRGHVKLAECLEHLQRDEQA. 2 disordered regions span residues 1217–1249 and 1267–1318; these read ASTNPELRRPRSEPSNYYSTEGHKDYPAPKKHK and LSLE…SASQ. Polar residues predominate over residues 1268-1291; the sequence is SLEQPNIRKQSPRSKQPSPETISP. The span at 1308 to 1318 shows a compositional bias: low complexity; sequence ETAASQASASQ. IQ domains lie at 1549–1585, 1586–1608, and 1609–1631; these read QEVAAAVIQRCYRKYKQLTWIALKYALYKKMTQAAIL, IQSKFRSYYEQKRFQQSRRAAVL, and IQNFYRSYKKCGRRRPARRTAVI.

Belongs to the CAMTA family. May interact with calmodulin.

Its subcellular location is the nucleus. The protein localises to the cytoplasm. In terms of biological role, transcriptional activator. The protein is Calmodulin-binding transcription activator 1 of Mus musculus (Mouse).